The sequence spans 440 residues: 3-phosphoshikimate 1-carboxyvinyltransferase (440 aa).

Residues lysine 19, serine 20, and arginine 24 each coordinate 3-phosphoshikimate. Lysine 19 is a binding site for phosphoenolpyruvate. Phosphoenolpyruvate-binding residues include glycine 92 and arginine 121. Serine 166, glutamine 168, aspartate 315, and lysine 342 together coordinate 3-phosphoshikimate. Position 168 (glutamine 168) interacts with phosphoenolpyruvate. Catalysis depends on aspartate 315, which acts as the Proton acceptor. Residues arginine 346 and arginine 399 each contribute to the phosphoenolpyruvate site.

The protein belongs to the EPSP synthase family. As to quaternary structure, monomer.

It localises to the cytoplasm. It carries out the reaction 3-phosphoshikimate + phosphoenolpyruvate = 5-O-(1-carboxyvinyl)-3-phosphoshikimate + phosphate. Its pathway is metabolic intermediate biosynthesis; chorismate biosynthesis; chorismate from D-erythrose 4-phosphate and phosphoenolpyruvate: step 6/7. Catalyzes the transfer of the enolpyruvyl moiety of phosphoenolpyruvate (PEP) to the 5-hydroxyl of shikimate-3-phosphate (S3P) to produce enolpyruvyl shikimate-3-phosphate and inorganic phosphate. The chain is 3-phosphoshikimate 1-carboxyvinyltransferase from Leptospira interrogans serogroup Icterohaemorrhagiae serovar copenhageni (strain Fiocruz L1-130).